The sequence spans 335 residues: MQFERISTEQKKLSLIQTFLHQNALKLDEQIEYFVVGYNDNEQIVVCGGLAGNIIKCVAIDESLRGSGVALQLITELVDLAYTLKRPHLFIYTKPEYATLFKSCGFYIISDANPYVVLLENSATRLQKQCSLWEKMRVDGNRIGSIVMNANPFTLGHRYLIEQALQQCDHLHLFIVGEDASQFSYTERFEMIQQGIFDLSNITLHSGSDYIISRATFPNYFLKDQLITDESYFEIDLKLFRLHIAQALGITHRFVGTELNCPVTAEYNRQMHYWLMDAEMNAPKINVIEIPRKTASNHIISASTVRKHLAEKNWAQLAEFVPMTTLNYLQKCGRF.

The N-acetyltransferase domain occupies 1-131 (MQFERISTEQ…SATRLQKQCS (131 aa)).

The catalysed reaction is holo-[citrate lyase ACP] + acetate + ATP = acetyl-[citrate lyase ACP] + AMP + diphosphate. In terms of biological role, acetylation of prosthetic group (2-(5''-phosphoribosyl)-3'-dephosphocoenzyme-A) of the gamma subunit of citrate lyase. This Haemophilus influenzae (strain ATCC 51907 / DSM 11121 / KW20 / Rd) protein is [Citrate [pro-3S]-lyase] ligase (citC).